The primary structure comprises 319 residues: 3'-5' exoribonuclease YhaM (319 aa).

A DNA-binding region (OB) is located at residues 12-90 (EAVDGYLLIK…QLKIASIRPT (79 aa)). The 117-residue stretch at 163–279 (HVVSMLRIGK…LHLIDNIDAK (117 aa)) folds into the HD domain.

This sequence belongs to the YhaM family.

Shows a 3'-5' exoribonuclease activity. The chain is 3'-5' exoribonuclease YhaM from Shouchella clausii (strain KSM-K16) (Alkalihalobacillus clausii).